The following is a 316-amino-acid chain: CD-NTase-associated protein 12 (316 aa).

Residues Arg4–Glu121 enclose the TIR domain. Residues Ser161–Pro316 are STING domain. 3',3'-c-di-GMP is bound by residues Phe172, Pro237, and Asp253.

This sequence in the C-terminal section; belongs to the bacterial STING family. In terms of assembly, forms homodimers; in the presence of c-di-GMP forms filaments with an ordered array of parallel-stacked subunits.

It catalyses the reaction NAD(+) + H2O = ADP-D-ribose + nicotinamide + H(+). Its activity is regulated as follows. NAD(+) hydrolase activity is strongly stimulated by c-di-GMP, weakly by 3'3'-cGAMP, very weakly by c-di-AMP but not at all by 2'3'-cGAMP. Self-association of TIR domains is required for NADase activity. Functionally, effector protein of a CBASS antiviral system with NAD(+) hydrolase activity. CBASS (cyclic oligonucleotide-based antiphage signaling system) provides immunity against bacteriophage. The CD-NTase protein synthesizes cyclic nucleotides in response to infection; these serve as specific second messenger signals. The signals activate a diverse range of effectors, leading to bacterial cell death and thus abortive phage infection. A type I-D(GG) CBASS system. In terms of biological role, binds c-di-GMP (synthesized by the cognate CdnE encoded upstream in the same operon) but not c-di-AMP, 2'-3'-cGAMP, 3'-3'-cGAMP or cUMP-AMP (tested without the N-terminal TIR domain). Upon activation by c-di-GMP forms filaments which hydrolyze NAD(+); filament formation is required for enzyme activation. The chain is CD-NTase-associated protein 12 from Lachnospiraceae bacterium (strain RUG226).